The sequence spans 161 residues: Large-conductance mechanosensitive channel (161 aa).

The next 2 helical transmembrane spans lie at 21–41 (VGVI…DGVI) and 79–99 (GAFI…FLLV). The segment covering 142 to 154 (TAAPKAAAAPVAK) has biased composition (low complexity). The disordered stretch occupies residues 142-161 (TAAPKAAAAPVAKPKTKPKA).

This sequence belongs to the MscL family. In terms of assembly, homopentamer.

The protein resides in the cell inner membrane. In terms of biological role, channel that opens in response to stretch forces in the membrane lipid bilayer. May participate in the regulation of osmotic pressure changes within the cell. In Caulobacter sp. (strain K31), this protein is Large-conductance mechanosensitive channel.